The chain runs to 199 residues: MKFSPLLDELIQSLRCLPGVGPKSAQRMAFQLLERDRKAGLKLASALSSAMSDVGHCQSCRTYTEETLCPICASHKRGTSSTICVVETPADVLAIEAGGHFTGRYFVLLGHLSPLDGVGPEELGLALLERHLASGDVAELILATNPTVEGEATAHFIADMARRHKVMISRIAHGVPVGGELEYVDSTTLALSFNGRLPL.

The segment at 57–72 (CQSCRTYTEETLCPIC) adopts a C4-type zinc-finger fold. Residues 81–176 (STICVVETPA…MISRIAHGVP (96 aa)) form the Toprim domain.

The protein belongs to the RecR family.

In terms of biological role, may play a role in DNA repair. It seems to be involved in an RecBC-independent recombinational process of DNA repair. It may act with RecF and RecO. The polypeptide is Recombination protein RecR (Shewanella baltica (strain OS195)).